Reading from the N-terminus, the 521-residue chain is MVKRRTVKYFLRRILALFVLCVPIYYLYTTVQRPPGYTKLKGSTRRKALIKKTFIESWTDYETYGWGKDEYYPIIKRGRNYLRKGMGWMIIDSLDTMMIMGLDEQVLRAREWVNNSLTWNQDDEEVSVFETTIRILGGLLSSYHLSQDKLYLDRAVDLADRLLAAYNTSTGLPRSNVNLGTRKSRKRTREYFVSTAESGTVQMELRYLSYLTGDPKYWITADKTMEVLLGDATWSHTGLVPITVNLITGAYVGRNIRLGSHGDSYYEYLLKQDLQLFSSGTVYRKAFDLSVDGIIEYLLNYTTPNHFAYIAELPGGLEHAQLPKMDHLVCFLPGTLMWGATNGTSLEAARTSKNWGTRQERDVKLAQELMRTCYEMYNMTATGLAPEIVFFDVDQTKNEIYSKRRDQHNLMRPETVESLFILYRITRDEIYREWGWNIFVSFLRYSRLPGRDAFTCLDSVESKKVKDQRDKTESFWFAETLKYLYLLFEDDFSILPLTNYTFNTEAHPFPNIENNMDLYTV.

The Cytoplasmic segment spans residues 1 to 8 (MVKRRTVK). A helical; Signal-anchor for type II membrane protein transmembrane segment spans residues 9–31 (YFLRRILALFVLCVPIYYLYTTV). The Lumenal segment spans residues 32–521 (QRPPGYTKLK…IENNMDLYTV (490 aa)). 5 N-linked (GlcNAc...) asparagine glycosylation sites follow: Asn-114, Asn-167, Asn-300, Asn-342, and Asn-378. An intrachain disulfide couples Cys-330 to Cys-373. Residue Glu-387 is the Proton donor of the active site. N-linked (GlcNAc...) asparagine glycosylation occurs at Asn-499. Residue Thr-504 coordinates Ca(2+).

The protein belongs to the glycosyl hydrolase 47 family. The cofactor is Ca(2+).

The protein resides in the membrane. The enzyme catalyses N(4)-(alpha-D-Man-(1-&gt;2)-alpha-D-Man-(1-&gt;2)-alpha-D-Man-(1-&gt;3)-[alpha-D-Man-(1-&gt;2)-alpha-D-Man-(1-&gt;3)-[alpha-D-Man-(1-&gt;2)-alpha-D-Man-(1-&gt;6)]-alpha-D-Man-(1-&gt;6)]-beta-D-Man-(1-&gt;4)-beta-D-GlcNAc-(1-&gt;4)-beta-D-GlcNAc)-L-asparaginyl-[protein] (N-glucan mannose isomer 9A1,2,3B1,2,3) + 4 H2O = N(4)-(alpha-D-Man-(1-&gt;3)-[alpha-D-Man-(1-&gt;3)-[alpha-D-Man-(1-&gt;6)]-alpha-D-Man-(1-&gt;6)]-beta-D-Man-(1-&gt;4)-beta-D-GlcNAc-(1-&gt;4)-beta-D-GlcNAc)-L-asparaginyl-[protein] (N-glucan mannose isomer 5A1,2) + 4 beta-D-mannose. It catalyses the reaction N(4)-(alpha-D-Man-(1-&gt;2)-alpha-D-Man-(1-&gt;2)-alpha-D-Man-(1-&gt;3)-[alpha-D-Man-(1-&gt;3)-[alpha-D-Man-(1-&gt;2)-alpha-D-Man-(1-&gt;6)]-alpha-D-Man-(1-&gt;6)]-beta-D-Man-(1-&gt;4)-beta-D-GlcNAc-(1-&gt;4)-beta-D-GlcNAc)-L-asparaginyl-[protein] (N-glucan mannose isomer 8A1,2,3B1,3) + 3 H2O = N(4)-(alpha-D-Man-(1-&gt;3)-[alpha-D-Man-(1-&gt;3)-[alpha-D-Man-(1-&gt;6)]-alpha-D-Man-(1-&gt;6)]-beta-D-Man-(1-&gt;4)-beta-D-GlcNAc-(1-&gt;4)-beta-D-GlcNAc)-L-asparaginyl-[protein] (N-glucan mannose isomer 5A1,2) + 3 beta-D-mannose. It functions in the pathway protein modification; protein glycosylation. Its activity is regulated as follows. Inhibited by kifunensine. Involved in glycoprotein quality control as it is important for the targeting of misfolded glycoproteins for degradation. It trims a single alpha-1,2-linked mannose residue from Man(9)GlcNAc(2) to produce Man(8)GlcNAc(2) with low efficiency. The polypeptide is Endoplasmic reticulum mannosyl-oligosaccharide 1,2-alpha-mannosidase (Schizosaccharomyces pombe (strain 972 / ATCC 24843) (Fission yeast)).